Consider the following 85-residue polypeptide: MAQKKGGGSTRNGRDSQPKMLGVKAFGGQAVQAGSIIVRQRGTQFHAGSNVGIGKDHTLFALVDGKVSFAVKGERNRRTVAIDPV.

A compositionally biased stretch (gly residues) spans 1 to 10 (MAQKKGGGST). Positions 1-20 (MAQKKGGGSTRNGRDSQPKM) are disordered.

Belongs to the bacterial ribosomal protein bL27 family.

This chain is Large ribosomal subunit protein bL27, found in Methylibium petroleiphilum (strain ATCC BAA-1232 / LMG 22953 / PM1).